A 473-amino-acid polypeptide reads, in one-letter code: Probable ribonuclease FAU-1 (473 aa).

The protein belongs to the FAU-1 family.

Probable RNase involved in rRNA stability through maturation and/or degradation of precursor rRNAs. Binds to RNA in loop regions with AU-rich sequences. In Hyperthermus butylicus (strain DSM 5456 / JCM 9403 / PLM1-5), this protein is Probable ribonuclease FAU-1.